Consider the following 738-residue polypeptide: DNA ligase (738 aa).

NAD(+)-binding positions include 48 to 52, 97 to 98, and Glu-136; these read DVVYD and SL. Catalysis depends on Lys-138, which acts as the N6-AMP-lysine intermediate. NAD(+) contacts are provided by Arg-159, Glu-196, Lys-356, and Lys-380. Positions 474, 477, 492, and 497 each coordinate Zn(2+). One can recognise a BRCT domain in the interval 659–738; it reads QLPQPLAGKT…SQLLELLEET (80 aa).

This sequence belongs to the NAD-dependent DNA ligase family. LigA subfamily. Mg(2+) is required as a cofactor. The cofactor is Mn(2+).

The catalysed reaction is NAD(+) + (deoxyribonucleotide)n-3'-hydroxyl + 5'-phospho-(deoxyribonucleotide)m = (deoxyribonucleotide)n+m + AMP + beta-nicotinamide D-nucleotide.. Functionally, DNA ligase that catalyzes the formation of phosphodiester linkages between 5'-phosphoryl and 3'-hydroxyl groups in double-stranded DNA using NAD as a coenzyme and as the energy source for the reaction. It is essential for DNA replication and repair of damaged DNA. In Cyanothece sp. (strain PCC 7425 / ATCC 29141), this protein is DNA ligase.